Consider the following 5381-residue polypeptide: Protein purity of essence (5381 aa).

Disordered regions lie at residues 140-174, 339-364, 599-621, 683-709, 1162-1212, and 1632-1659; these read KHPESSNKSIMSMAGSTTGGAGAGGSNDKESPKLE, QQQTAAAASTSQGSGGGLSSVQTSKD, SPETHDDNANTSSQERSGEQKSA, RNDSEQQSPPSTAAAVAAATGAGSSGS, SGGD…STET, and QAAQPNPSEESSQACDHSEGGEQRQSER. The span at 339 to 350 shows a compositional bias: low complexity; it reads QQQTAAAASTSQ. Low complexity-rich tracts occupy residues 690-709 and 1167-1176; these read SPPSTAAAVAAATGAGSSGS and SSCTSAASSS. A compositionally biased stretch (polar residues) spans 1632-1646; that stretch reads QAAQPNPSEESSQAC. The span at 1647–1658 shows a compositional bias: basic and acidic residues; that stretch reads DHSEGGEQRQSE. The UBR-type zinc-finger motif lies at 1815 to 1884; that stretch reads KLCTFSQTQK…EDGSCQALSR (70 aa). Disordered stretches follow at residues 1917 to 1939, 2443 to 2479, 2632 to 2652, 3037 to 3143, 3537 to 3562, and 4247 to 4280; these read KRSNTAPGATQQQHGAPARKDSI, KNTTNNPQGKSKGGGSAAAGKLLHRKASSQQHQKQLT, PDDSEDVPAPSSGPTPVTATQ, VSAG…DNNE, KQQQQQQQPPPAVVSASSKLRSDREK, and HHQQDAPAGTKPKSSKQQQSAGTETPPRKSKEAA. Polar residues-rich tracts occupy residues 1920-1930, 2470-2479, 2643-2652, and 3048-3058; these read NTAPGATQQQH, SSQQHQKQLT, SGPTPVTATQ, and NVATDGSTLRT. The span at 3065 to 3075 shows a compositional bias: gly residues; it reads GSGGSESGGSG. A compositionally biased stretch (polar residues) spans 3084-3104; that stretch reads ARSSNFGDHPNTTPPRQSCSS. A compositionally biased stretch (gly residues) spans 3119–3132; it reads SGSGGSASVPGGGL. The segment at 4904 to 5374 is UBR4 E3 catalytic module; sequence PSLKYILRFL…SFIEDLLASL (471 aa). The HemiRING-type zinc finger occupies 5022 to 5136; the sequence is GLTCFICREG…SSYMQESTQR (115 aa). Zn(2+) is bound by residues cysteine 5025, cysteine 5028, histidine 5074, and cysteine 5077. Residues 5139-5374 form the UZI domain; it reads ISYTSSIHDL…SFIEDLLASL (236 aa).

The protein belongs to the UBR4 family.

Has a role in growth of the perineurial glial layer of the larval peripheral nerve. May have a role in male fertility and eye development or function. May bind calmodulin. In Drosophila pseudoobscura pseudoobscura (Fruit fly), this protein is Protein purity of essence.